Reading from the N-terminus, the 152-residue chain is Deoxyuridine 5'-triphosphate nucleotidohydrolase (152 aa).

Residues Arg62–Gly64, Asn75, and Thr79–Asp81 each bind substrate.

It belongs to the dUTPase family. Mg(2+) is required as a cofactor.

It catalyses the reaction dUTP + H2O = dUMP + diphosphate + H(+). Its pathway is pyrimidine metabolism; dUMP biosynthesis; dUMP from dCTP (dUTP route): step 2/2. Its function is as follows. This enzyme is involved in nucleotide metabolism: it produces dUMP, the immediate precursor of thymidine nucleotides and it decreases the intracellular concentration of dUTP so that uracil cannot be incorporated into DNA. This is Deoxyuridine 5'-triphosphate nucleotidohydrolase from Leifsonia xyli subsp. xyli (strain CTCB07).